The sequence spans 1026 residues: Translation initiation factor IF-2, chloroplastic (1026 aa).

Residues 1–63 (MPSMLVLVGT…KKWLCRYSVS (63 aa)) constitute a chloroplast transit peptide. Basic and acidic residues predominate over residues 158–173 (AEKLEIPKPGNKEGGE). Disordered regions lie at residues 158–208 (AEKL…TMKS), 230–284 (FNRG…PPVK), and 300–393 (VSEE…KWSK). Residues 178 to 194 (SQPSANSSNSRNGSYAN) are compositionally biased toward polar residues. Over residues 254–269 (LAPPQPPFRPQPPVRP) the composition is skewed to pro residues. Over residues 306-317 (SSVKSKERKPIL) the composition is skewed to basic and acidic residues. The span at 384-393 (SGRKGRKWSK) shows a compositional bias: basic residues. Residues 499–672 (DRPPVITIMG…MLVAELQELK (174 aa)) form the tr-type G domain. Positions 508 to 515 (GHVDHGKT) are G1. 508–515 (GHVDHGKT) provides a ligand contact to GTP. Residues 533–537 (GITQG) form a G2 region. The G3 stretch occupies residues 558–561 (DTPG). Residues 558-562 (DTPGH) and 612-615 (NKID) each bind GTP. The tract at residues 612 to 615 (NKID) is G4. The tract at residues 648–650 (SAL) is G5.

This sequence belongs to the TRAFAC class translation factor GTPase superfamily. Classic translation factor GTPase family. IF-2 subfamily.

The protein resides in the plastid. It is found in the chloroplast. Its function is as follows. One of the essential components for the initiation of protein synthesis. Protects formylmethionyl-tRNA from spontaneous hydrolysis and promotes its binding to the 30S ribosomal subunits. Also involved in the hydrolysis of GTP during the formation of the 70S ribosomal complex. In Arabidopsis thaliana (Mouse-ear cress), this protein is Translation initiation factor IF-2, chloroplastic.